Here is a 231-residue protein sequence, read N- to C-terminus: Large ribosomal subunit protein uL1 (231 aa).

Belongs to the universal ribosomal protein uL1 family. Part of the 50S ribosomal subunit.

Its function is as follows. Binds directly to 23S rRNA. The L1 stalk is quite mobile in the ribosome, and is involved in E site tRNA release. Protein L1 is also a translational repressor protein, it controls the translation of the L11 operon by binding to its mRNA. The polypeptide is Large ribosomal subunit protein uL1 (Kosmotoga olearia (strain ATCC BAA-1733 / DSM 21960 / TBF 19.5.1)).